The primary structure comprises 262 residues: Acyl-[acyl-carrier-protein]--UDP-N-acetylglucosamine O-acyltransferase (262 aa).

The protein belongs to the transferase hexapeptide repeat family. LpxA subfamily. Homotrimer.

It localises to the cytoplasm. The enzyme catalyses a (3R)-hydroxyacyl-[ACP] + UDP-N-acetyl-alpha-D-glucosamine = a UDP-3-O-[(3R)-3-hydroxyacyl]-N-acetyl-alpha-D-glucosamine + holo-[ACP]. It functions in the pathway glycolipid biosynthesis; lipid IV(A) biosynthesis; lipid IV(A) from (3R)-3-hydroxytetradecanoyl-[acyl-carrier-protein] and UDP-N-acetyl-alpha-D-glucosamine: step 1/6. Functionally, involved in the biosynthesis of lipid A, a phosphorylated glycolipid that anchors the lipopolysaccharide to the outer membrane of the cell. The polypeptide is Acyl-[acyl-carrier-protein]--UDP-N-acetylglucosamine O-acyltransferase (Yersinia enterocolitica serotype O:8 / biotype 1B (strain NCTC 13174 / 8081)).